A 189-amino-acid chain; its full sequence is Small ribosomal subunit protein uS5 (189 aa).

The S5 DRBM domain maps to 23-86 (FIDKLVHINR…ESAKREMIYV (64 aa)).

Belongs to the universal ribosomal protein uS5 family. Part of the 30S ribosomal subunit. Contacts proteins S4 and S8.

With S4 and S12 plays an important role in translational accuracy. Functionally, located at the back of the 30S subunit body where it stabilizes the conformation of the head with respect to the body. The sequence is that of Small ribosomal subunit protein uS5 from Bartonella bacilliformis (strain ATCC 35685 / KC583 / Herrer 020/F12,63).